A 605-amino-acid chain; its full sequence is Meiosis-specific protein HOP1 (605 aa).

The region spanning 20 to 250 is the HORMA domain; sequence EQSQKLLQTM…TKHHKVALSV (231 aa). The segment at 348-364 is a zinc-finger region; that stretch reads CKSCRKTLHGICYGNFL.

Its subcellular location is the nucleus. It localises to the chromosome. In terms of biological role, probable constituent of the synaptonemal complex during meiosis. May interact with RED1. The chain is Meiosis-specific protein HOP1 (HOP1) from Saccharomyces cerevisiae (strain ATCC 204508 / S288c) (Baker's yeast).